We begin with the raw amino-acid sequence, 828 residues long: Neurotrophin receptor-interacting factor 1 (828 aa).

In terms of domain architecture, KRAB 1 spans valine 14–proline 85. Lysine 15 participates in a covalent cross-link: Glycyl lysine isopeptide (Lys-Gly) (interchain with G-Cter in ubiquitin). Positions arginine 158–serine 240 constitute an SCAN box domain. The KRAB 2 domain maps to valine 280–glutamate 370. Disordered regions lie at residues arginine 328–threonine 355, asparagine 377–threonine 490, and glutamine 575–serine 611. A compositionally biased stretch (polar residues) spans proline 345 to threonine 355. Basic and acidic residues predominate over residues glutamate 384–glutamate 394. The span at lysine 418–arginine 433 shows a compositional bias: basic residues. Residues arginine 458–glutamate 478 show a composition bias toward polar residues. A compositionally biased stretch (basic residues) spans serine 589–glycine 599. Positions serine 600–serine 611 are enriched in basic and acidic residues. 5 C2H2-type zinc fingers span residues cysteine 684–histidine 706, tyrosine 712–histidine 734, phenylalanine 740–histidine 762, tyrosine 768–histidine 790, and tyrosine 796–histidine 818.

Belongs to the krueppel C2H2-type zinc-finger protein family. Interacts with NGFR/p75(NTR). Interacts (via KRAB 1 domain) with TRAF6. Interacts (when ubiquitinated at Lys-15) with SQSTM1/p62. Post-translationally, ubiquitinated by TRAF6 at Lys-15 through 'Lys-63'-linked polyubiquitination. 'Lys-63'-linked polyubiquitination occurs in response to NGFR/p75(NTR) cleavage by gamma-secretase and promotes binding with the ICD cleavage product of NGFR/p75(NTR), followed by translocation into the nucleus and subsequent apoptosis. In terms of tissue distribution, ubiquitously expressed at low level. Expressed at higher level in testis.

The protein localises to the cytoplasm. The protein resides in the nucleus. In terms of biological role, transcription regulator involved in NGFR/p75(NTR)-mediated apoptosis. Essential component of the NGFR/p75(NTR) apoptotic pathway: upon ligand-binding and subsequent cleavage of NGFR/p75(NTR), binds to the intracellular domain (ICD) cleavage product of NGFR/p75(NTR), translocates to the nucleus and induces apoptosis, possibly by regulating expression of key regulators of apoptosis. Induces NGFR/p75(NTR)-mediated apoptosis in retina and sympathetic neurons. May also regulate expression of neuronal cholesterol biosynthesis genes. Probably acts as a transcription repressor: specifically binds to the 3'-end of zinc-finger coding genes and recruiting chromatin-modifying proteins such as SETDB1 and TRIM28/KAP1, leading to transcription repression. The polypeptide is Neurotrophin receptor-interacting factor 1 (Nrif1) (Mus musculus (Mouse)).